Reading from the N-terminus, the 530-residue chain is Cytochrome P450 2U1 (530 aa).

A run of 4 helical transmembrane segments spans residues 21-41, 99-119, 247-267, and 328-348; these read VRATGGALLLCLLAVLLGWVW, VYGNIFSFFIGHRLVVVLSDF, ICLHSQLFLINICPWFYYLPF, and LFYIIGDLFIAGTDTTTNSLL. Cys476 contributes to the heme binding site. A helical transmembrane segment spans residues 481–501; that stretch reads LAKMELFLMFVSLMQTFTFAL.

It belongs to the cytochrome P450 family. The cofactor is heme. In terms of tissue distribution, widely expressed. Expressed in heart, brain and liver.

It is found in the endoplasmic reticulum membrane. It localises to the microsome membrane. The protein resides in the mitochondrion inner membrane. The enzyme catalyses an omega-methyl-long-chain fatty acid + reduced [NADPH--hemoprotein reductase] + O2 = an omega-hydroxy-long-chain fatty acid + oxidized [NADPH--hemoprotein reductase] + H2O + H(+). It carries out the reaction (5Z,8Z,11Z,14Z)-eicosatetraenoate + reduced [NADPH--hemoprotein reductase] + O2 = 19-hydroxy-(5Z,8Z,11Z,14Z)-eicosatetraenoate + oxidized [NADPH--hemoprotein reductase] + H2O + H(+). The catalysed reaction is (5Z,8Z,11Z,14Z)-eicosatetraenoate + reduced [NADPH--hemoprotein reductase] + O2 = 20-hydroxy-(5Z,8Z,11Z,14Z)-eicosatetraenoate + oxidized [NADPH--hemoprotein reductase] + H2O + H(+). It catalyses the reaction N-[(5Z,8Z,11Z,14Z)-eicosatetraenoyl]-serotonin + reduced [NADPH--hemoprotein reductase] + O2 = 2-oxo-N-[(5Z,8Z,11Z,14Z)-eicosatetraenoyl]-serotonin + oxidized [NADPH--hemoprotein reductase] + H2O + H(+). In terms of biological role, a cytochrome P450 monooxygenase involved in the metabolism of arachidonic acid and its conjugates. Mechanistically, uses molecular oxygen inserting one oxygen atom into a substrate, and reducing the second into a water molecule, with two electrons provided by NADPH via cytochrome P450 reductase (CPR; NADPH-ferrihemoprotein reductase). Acts as an omega and omega-1 hydroxylase for arachidonic acid and possibly for other long chain fatty acids. May modulate the arachidonic acid signaling pathway and play a role in other fatty acid signaling processes. May down-regulate the biological activities of N-arachidonoyl-serotonin, an endocannabinoid that has anti-nociceptive effects through inhibition of fatty acid amide hydrolase FAAH, TRPV1 receptor and T-type calcium channels. Catalyzes C-2 oxidation of the indole ring of N-arachidonoyl-serotonin forming a less active product 2-oxo-N-arachidonoyl-serotonin. The protein is Cytochrome P450 2U1 of Mus musculus (Mouse).